A 677-amino-acid polypeptide reads, in one-letter code: MPPKSRLSRIRNIGIIAHIDAGKTTVSERILYYTGKSYKIGEVHDGEAVMDWMPQEQERGITISSAVTTCNWANHEIHIIDTPGHVDFTIEVERSLRVLDGAVVVFDAVAGVEPQSETVWHQADKYGVPKIAFINKMDRVGADYFRVVKMMKERFASVPLPIQIPLGQQDQFLGVVDLIREKVVTWDDGSKGVNYQYSEIPGDREADAKANREIMLEILAEVDDGIAEKYLEGEEISESDLLRAIREATLANRLVPVMCGSALKNKGIQPVLDAVVNFLPSPEDVPPVRGIHPATKEELSRASSVKEPLSALAFKVMQDEGRKLTYIRIYSGQMKAGEELYNAGKKKKEKASRLLKMHANKRERLEQAGAGDIVAVMGLKETVTGDTICDEKNPILLESMEFYEPVISQAIEAKTPADQEKLSLALLKLMEEDPTLRVKYDEETAQTVISGMGELHLEVVIDRLGREFNAHVNVGKPRVVHRETIRNKVDVEGHFERELGDKKHFGHVRLVLEPKERGSGVEIEWKADTAILPAEYVKAVEEGIQESLVSGAVAGYPVVDIRIKILEVGLKEGESSPIGYKIAASSAFRDGCIKGESVLLQPIMAVNVITPAEFMGDVIGDINARKGEIQTITPKGAMCEIRALVPLKALFGYSTDLRSATQGRAVFTMQFYAYDQG.

The tr-type G domain maps to 8–283 (SRIRNIGIIA…AVVNFLPSPE (276 aa)). GTP-binding positions include 17–24 (AHIDAGKT), 81–85 (DTPGH), and 135–138 (NKMD).

Belongs to the TRAFAC class translation factor GTPase superfamily. Classic translation factor GTPase family. EF-G/EF-2 subfamily.

It localises to the cytoplasm. Its function is as follows. Catalyzes the GTP-dependent ribosomal translocation step during translation elongation. During this step, the ribosome changes from the pre-translocational (PRE) to the post-translocational (POST) state as the newly formed A-site-bound peptidyl-tRNA and P-site-bound deacylated tRNA move to the P and E sites, respectively. Catalyzes the coordinated movement of the two tRNA molecules, the mRNA and conformational changes in the ribosome. The protein is Elongation factor G 2 of Syntrophus aciditrophicus (strain SB).